The following is a 453-amino-acid chain: tRNA modification GTPase MnmE (453 aa).

The (6S)-5-formyl-5,6,7,8-tetrahydrofolate site is built by Arg22, Glu79, and Lys119. The TrmE-type G domain maps to Gly215 to Gly376. K(+) is bound at residue Asn225. Residues Asn225 to Ser230, Thr244 to Thr250, Asp269 to Gly272, and Asn334 to Asp337 each bind GTP. Ser229 is a binding site for Mg(2+). Residues Thr244, Ile246, and Thr249 each coordinate K(+). Thr250 lines the Mg(2+) pocket. A (6S)-5-formyl-5,6,7,8-tetrahydrofolate-binding site is contributed by Lys453.

This sequence belongs to the TRAFAC class TrmE-Era-EngA-EngB-Septin-like GTPase superfamily. TrmE GTPase family. Homodimer. Heterotetramer of two MnmE and two MnmG subunits. The cofactor is K(+).

It localises to the cytoplasm. Its function is as follows. Exhibits a very high intrinsic GTPase hydrolysis rate. Involved in the addition of a carboxymethylaminomethyl (cmnm) group at the wobble position (U34) of certain tRNAs, forming tRNA-cmnm(5)s(2)U34. The sequence is that of tRNA modification GTPase MnmE from Vibrio vulnificus (strain CMCP6).